A 156-amino-acid polypeptide reads, in one-letter code: Small ribosomal subunit protein uS7 (156 aa).

It belongs to the universal ribosomal protein uS7 family. In terms of assembly, part of the 30S ribosomal subunit. Contacts proteins S9 and S11.

In terms of biological role, one of the primary rRNA binding proteins, it binds directly to 16S rRNA where it nucleates assembly of the head domain of the 30S subunit. Is located at the subunit interface close to the decoding center, probably blocks exit of the E-site tRNA. This is Small ribosomal subunit protein uS7 from Cronobacter sakazakii (strain ATCC BAA-894) (Enterobacter sakazakii).